Here is a 244-residue protein sequence, read N- to C-terminus: MDTESNRRANLALPQEPSSVPAFEVLEISPQEVSSGRLLKSASSPPLHTWLTVLKKEQEFLGVTQILTAMICLCFGTVVCSVLDISHIEGDIFSSFKAGYPFWGAIFFSISGMLSIISERRNATYLVRGSLGANTASSIAGGTGITILIINLKKSLAYIHIHSCQKFFETKCFMASFSTEIVVMMLFLTILGLGSAVSLTICGAGEELKGNKVPEDRVYEELNIYSATYSELEDPGEMSPPIDL.

The Cytoplasmic segment spans residues 1–59 (MDTESNRRANLALPQEPSSVPAFEVLEISPQEVSSGRLLKSASSPPLHTWLTVLKKEQE). A helical membrane pass occupies residues 60–79 (FLGVTQILTAMICLCFGTVV). The Extracellular segment spans residues 80 to 97 (CSVLDISHIEGDIFSSFK). The chain crosses the membrane as a helical span at residues 98-117 (AGYPFWGAIFFSISGMLSII). Residues 118–130 (SERRNATYLVRGS) lie on the Cytoplasmic side of the membrane. A helical transmembrane segment spans residues 131 to 150 (LGANTASSIAGGTGITILII). Topologically, residues 151–180 (NLKKSLAYIHIHSCQKFFETKCFMASFSTE) are extracellular. Residues 181 to 200 (IVVMMLFLTILGLGSAVSLT) form a helical membrane-spanning segment. Residues 201 to 244 (ICGAGEELKGNKVPEDRVYEELNIYSATYSELEDPGEMSPPIDL) are Cytoplasmic-facing. Residues Tyr-219 and Tyr-225 each carry the phosphotyrosine modification. A Phosphoserine modification is found at Ser-226. Phosphotyrosine is present on Tyr-229.

Belongs to the MS4A family. Tetramer of an alpha chain, a beta chain, and two disulfide linked gamma chains. Binds LILRB1. Interacts with FGR, FES/FPS and LYN. Post-translationally, phosphorylated on tyrosine residues by LYN. As to expression, found on the surface of mast cells and basophils.

The protein resides in the membrane. Its function is as follows. High affinity receptor that binds to the Fc region of immunoglobulins epsilon. Aggregation of FCER1 by multivalent antigens is required for the full mast cell response, including the release of preformed mediators (such as histamine) by degranulation and de novo production of lipid mediators and cytokines. Also mediates the secretion of important lymphokines. Binding of allergen to receptor-bound IgE leads to cell activation and the release of mediators responsible for the manifestations of allergy. This chain is High affinity immunoglobulin epsilon receptor subunit beta (MS4A2), found in Homo sapiens (Human).